A 246-amino-acid polypeptide reads, in one-letter code: 23S rRNA (guanosine-2'-O-)-methyltransferase RlmB (246 aa).

Positions 196, 216, and 225 each coordinate S-adenosyl-L-methionine.

This sequence belongs to the class IV-like SAM-binding methyltransferase superfamily. RNA methyltransferase TrmH family. RlmB subfamily. In terms of assembly, homodimer.

It is found in the cytoplasm. It carries out the reaction guanosine(2251) in 23S rRNA + S-adenosyl-L-methionine = 2'-O-methylguanosine(2251) in 23S rRNA + S-adenosyl-L-homocysteine + H(+). Specifically methylates the ribose of guanosine 2251 in 23S rRNA. The polypeptide is 23S rRNA (guanosine-2'-O-)-methyltransferase RlmB (Yersinia pestis).